A 557-amino-acid chain; its full sequence is E3 ubiquitin-protein ligase rnf168 (557 aa).

The segment at 16-55 (CPICQEILLEPVTLPCKHTLCNPCFQMTVEKASLCCPFCR) adopts an RING-type zinc-finger fold. The LR motif 1 motif lies at 112-130 (LCQPGEIRQEYEAEVSKIE). The UMI motif motif lies at 145–153 (EDYIQKLLA). Short sequence motifs (MIU motif) lie at residues 170–193 (MEEQ…VSNA) and 422–445 (RRRQ…KELK). The LR motif 2 signature appears at 449-460 (RGKGSPDEYELR). A disordered region spans residues 482–543 (PLRKEIPVQD…GINVLKPINK (62 aa)). A compositionally biased stretch (polar residues) spans 490 to 500 (QDNSRNTQSEY). Residues 508–521 (PSRKNSVRSARVRQ) are compositionally biased toward basic residues.

Belongs to the RNF168 family. As to quaternary structure, monomer.

The protein localises to the nucleus. The enzyme catalyses S-ubiquitinyl-[E2 ubiquitin-conjugating enzyme]-L-cysteine + [acceptor protein]-L-lysine = [E2 ubiquitin-conjugating enzyme]-L-cysteine + N(6)-ubiquitinyl-[acceptor protein]-L-lysine.. It participates in protein modification; protein ubiquitination. Its function is as follows. E3 ubiquitin-protein ligase required for accumulation of repair proteins to sites of DNA damage. Acts with ube2n/ubc13 to amplify the rnf8-dependent histone ubiquitination. Recruited to sites of DNA damage at double-strand breaks (DSBs) by binding to ubiquitinated histone H2A and ubiquitinates histone H2A and H2AX, leading to amplify the rnf8-dependent H2A ubiquitination and promoting the formation of 'Lys-63'-linked ubiquitin conjugates. This leads to concentrate ubiquitinated histones H2A and H2AX at DNA lesions to the threshold required for recruitment of tp53bp1 and brca1. Catalyzes monoubiquitination of 'Lys-13' and 'Lys-15' of nucleosomal histone H2A (H2AK13Ub and H2AK15Ub, respectively). In Xenopus laevis (African clawed frog), this protein is E3 ubiquitin-protein ligase rnf168.